Reading from the N-terminus, the 81-residue chain is uncharacterized protein (81 aa).

The N-terminal stretch at 1-31 (MRYNSFLSVLALFNVLLWFTFILAISMTFSA) is a signal peptide. The chain crosses the membrane as a helical span at residues 52-74 (WFFVLLPYVIGLFFAIFDSATIG).

The protein resides in the membrane. This is an uncharacterized protein from Pasteurella multocida (strain Pm70).